A 412-amino-acid polypeptide reads, in one-letter code: Divalent metal cation transporter MntH (412 aa).

10 consecutive transmembrane segments (helical) span residues 19 to 39 (LSLM…GNFA), 46 to 66 (AAYG…AMLI), 98 to 118 (WVQA…GAAI), 122 to 142 (LLLG…TFLI), 155 to 175 (MVIG…LVFS), 196 to 216 (AVLL…IYLH), 241 to 261 (IAMT…AAAF), 286 to 306 (AAAV…TVVG), 348 to 368 (VLVL…VPLL), and 392 to 412 (LIVV…MSGI).

Belongs to the NRAMP family.

It localises to the cell inner membrane. Functionally, h(+)-stimulated, divalent metal cation uptake system. The protein is Divalent metal cation transporter MntH of Pectobacterium carotovorum subsp. carotovorum (strain PC1).